A 377-amino-acid polypeptide reads, in one-letter code: DNA replication and repair protein RecF (377 aa).

Residue 30 to 37 participates in ATP binding; sequence GLNGSGKT.

This sequence belongs to the RecF family.

The protein localises to the cytoplasm. In terms of biological role, the RecF protein is involved in DNA metabolism; it is required for DNA replication and normal SOS inducibility. RecF binds preferentially to single-stranded, linear DNA. It also seems to bind ATP. This chain is DNA replication and repair protein RecF, found in Cytophaga hutchinsonii (strain ATCC 33406 / DSM 1761 / CIP 103989 / NBRC 15051 / NCIMB 9469 / D465).